A 134-amino-acid chain; its full sequence is MEKSLHLEIVTPDKLVLSEQVDYVGAPGFEGEFGVLPSHIPFLSALAIGSLYYKANGKTHHVFVSGGFAEVSDNKVTVLAESAERAEDIDIDRARKAKDRAEQRLAQIKEKVDHARAQAALQRALARMRVRGNA.

Belongs to the ATPase epsilon chain family. As to quaternary structure, F-type ATPases have 2 components, CF(1) - the catalytic core - and CF(0) - the membrane proton channel. CF(1) has five subunits: alpha(3), beta(3), gamma(1), delta(1), epsilon(1). CF(0) has three main subunits: a, b and c.

The protein localises to the cell inner membrane. Produces ATP from ADP in the presence of a proton gradient across the membrane. The sequence is that of ATP synthase epsilon chain from Nitratidesulfovibrio vulgaris (strain ATCC 29579 / DSM 644 / CCUG 34227 / NCIMB 8303 / VKM B-1760 / Hildenborough) (Desulfovibrio vulgaris).